Reading from the N-terminus, the 146-residue chain is Large ribosomal subunit protein uL11 (146 aa).

This sequence belongs to the universal ribosomal protein uL11 family. In terms of assembly, part of the ribosomal stalk of the 50S ribosomal subunit. Interacts with L10 and the large rRNA to form the base of the stalk. L10 forms an elongated spine to which L12 dimers bind in a sequential fashion forming a multimeric L10(L12)X complex. In terms of processing, one or more lysine residues are methylated.

In terms of biological role, forms part of the ribosomal stalk which helps the ribosome interact with GTP-bound translation factors. This Wolbachia pipientis wMel protein is Large ribosomal subunit protein uL11.